Consider the following 368-residue polypeptide: Phospho-N-acetylmuramoyl-pentapeptide-transferase (368 aa).

The next 9 helical transmembrane spans lie at 2–22, 51–71, 80–100, 117–137, 167–187, 193–213, 234–254, 271–291, and 340–360; these read IALIIGMLVSLIVTLVGTPLL, TLGGVVINFAILLGWASSALY, PSWSAALVLFAMLSMGLLGFI, GGKFIGQFIFATIYAVLALLI, VAIILFVIWVNFLMTAWTNAV, LDGLAAGSSMIAFTGFGIIAF, PLDLTVIAVCAAVACFGFLWY, LGGLFAALSIATHTEFLAVVL, and FWMIELIFVLLALTIFYGDWV.

Belongs to the glycosyltransferase 4 family. MraY subfamily. The cofactor is Mg(2+).

It localises to the cell membrane. The enzyme catalyses UDP-N-acetyl-alpha-D-muramoyl-L-alanyl-gamma-D-glutamyl-meso-2,6-diaminopimeloyl-D-alanyl-D-alanine + di-trans,octa-cis-undecaprenyl phosphate = di-trans,octa-cis-undecaprenyl diphospho-N-acetyl-alpha-D-muramoyl-L-alanyl-D-glutamyl-meso-2,6-diaminopimeloyl-D-alanyl-D-alanine + UMP. It participates in cell wall biogenesis; peptidoglycan biosynthesis. Its function is as follows. Catalyzes the initial step of the lipid cycle reactions in the biosynthesis of the cell wall peptidoglycan: transfers peptidoglycan precursor phospho-MurNAc-pentapeptide from UDP-MurNAc-pentapeptide onto the lipid carrier undecaprenyl phosphate, yielding undecaprenyl-pyrophosphoryl-MurNAc-pentapeptide, known as lipid I. The protein is Phospho-N-acetylmuramoyl-pentapeptide-transferase of Bifidobacterium longum (strain DJO10A).